The chain runs to 452 residues: Fructose-2,6-bisphosphatase (452 aa).

The interval 1–223 (MGYSTISNDN…VFYVMNIRPK (223 aa)) is 6-phosphofructo-2-kinase. Residue 20–28 (GLPARGKSF) participates in ATP binding. Residues R53 and R78 each contribute to the beta-D-fructose 6-phosphate site. The active site involves D104. Residues T106 and R112 each contribute to the beta-D-fructose 6-phosphate site. ATP is bound at residue 143 to 148 (NAKDIG). Positions 169 and 173 each coordinate beta-D-fructose 6-phosphate. The interval 224-452 (PKYIWLSRHG…LNDSPLEDKF (229 aa)) is fructose-2,6-bisphosphatase. R231 is a binding site for beta-D-fructose 2,6-bisphosphate. Residue H232 is the Tele-phosphohistidine intermediate of the active site. Beta-D-fructose 2,6-bisphosphate contacts are provided by N238 and G244. E302 acts as the Proton donor/acceptor in catalysis. The beta-D-fructose 2,6-bisphosphate site is built by Y313, R327, K331, Y342, Q368, and R372. 324-327 (FKAR) contacts ATP. Residues 368 to 372 (QAVLR) and Y404 contribute to the ATP site. Phosphoserine occurs at positions 435 and 446.

This sequence in the C-terminal section; belongs to the phosphoglycerate mutase family.

It catalyses the reaction beta-D-fructose 2,6-bisphosphate + H2O = beta-D-fructose 6-phosphate + phosphate. Inhibited by fructose 6-P, activated by glycerol 3-P. Monofunctional, high-specificity fructose-2,6-bisphosphatase, which releases phosphate from the 2-position of fructose 2,6-bisphosphate. Has no detectable 6-phosphofructo-2-kinase activity. This chain is Fructose-2,6-bisphosphatase, found in Saccharomyces cerevisiae (strain ATCC 204508 / S288c) (Baker's yeast).